Reading from the N-terminus, the 591-residue chain is Glucose-6-phosphate isomerase (591 aa).

The active-site Proton donor is E380. Catalysis depends on residues H411 and K540.

It belongs to the GPI family. Homodimer.

The protein resides in the cytoplasm. The catalysed reaction is alpha-D-glucose 6-phosphate = beta-D-fructose 6-phosphate. It participates in carbohydrate degradation; glycolysis; D-glyceraldehyde 3-phosphate and glycerone phosphate from D-glucose: step 2/4. This Plasmodium falciparum protein is Glucose-6-phosphate isomerase (GGI.R1).